Consider the following 486-residue polypeptide: Glycogen synthase 2 (486 aa).

Residue Lys15 coordinates ADP-alpha-D-glucose.

The protein belongs to the glycosyltransferase 1 family. Bacterial/plant glycogen synthase subfamily.

It carries out the reaction [(1-&gt;4)-alpha-D-glucosyl](n) + ADP-alpha-D-glucose = [(1-&gt;4)-alpha-D-glucosyl](n+1) + ADP + H(+). It participates in glycan biosynthesis; glycogen biosynthesis. In terms of biological role, synthesizes alpha-1,4-glucan chains using ADP-glucose. The polypeptide is Glycogen synthase 2 (glgA2) (Rhizobium meliloti (strain 1021) (Ensifer meliloti)).